The primary structure comprises 529 residues: Transcription activator of gluconeogenesis ERT1 (529 aa).

A disordered region spans residues 1–31; it reads MCTPDENDYKTSTDPDTSANTNHTLEKKKRK. Polar residues predominate over residues 14–23; it reads DPDTSANTNH. Positions 40–68 form a DNA-binding region, zn(2)-C6 fungal-type; it reads CVNCSRLHVSCEAKRPCLRCISKGLTATC. A compositionally biased stretch (low complexity) spans 174-193; the sequence is SNSTIGNSSNNSPTGTNTSP. The interval 174-198 is disordered; the sequence is SNSTIGNSSNNSPTGTNTSPEETEM. The PAS domain occupies 408 to 480; sequence TLLEYVKFIA…KTLSKVAYRD (73 aa).

Belongs to the ERT1/acuK family.

The protein resides in the cytoplasm. It localises to the nucleus. Transcription factor which regulates nonfermentable carbon utilization. Activator of gluconeogenetic genes like PCK1. Involved in restriction of Ty1 transposition. The sequence is that of Transcription activator of gluconeogenesis ERT1 (ERT1) from Saccharomyces cerevisiae (strain ATCC 204508 / S288c) (Baker's yeast).